The sequence spans 215 residues: Inositol diphosphatase DSP1 (215 aa).

The region spanning 58–209 (NFSMVDNGIF…VSSFSHIPMS (152 aa)) is the Tyrosine-protein phosphatase domain. The WPD loop important for active site topology stretch occupies residues 114 to 126 (FGIEGNKEPFVNI). 4 residues coordinate 1D-myo-inositol hexakisphosphate: Asn125, Ile126, His129, and Lys130. Cys150 functions as the Phosphocysteine intermediate in the catalytic mechanism.

The protein belongs to the protein-tyrosine phosphatase family. Atypical dual-specificity phosphatase Siw14-like subfamily. In terms of assembly, homodimer and homohexamer; behaves as a monomer in solution. In terms of tissue distribution, highly expressed in siliques and at lower levels in roots, leaves and flowers.

The catalysed reaction is 5-diphospho-1D-myo-inositol 1,2,3,4,6-pentakisphosphate + H2O = 1D-myo-inositol hexakisphosphate + phosphate + H(+). The enzyme catalyses 1,5-bis(diphospho)-1D-myo-inositol 2,3,4,6-tetrakisphosphate + H2O = 1-diphospho-1D-myo-inositol 2,3,4,5,6-pentakisphosphate + phosphate + 2 H(+). It carries out the reaction 3,5-bis(diphospho)-1D-myo-inositol 1,2,4,6-tetrakisphosphate + H2O = 3-diphospho-1D-myo-inositol 1,2,4,5,6-pentakisphosphate + phosphate + 2 H(+). It catalyses the reaction 6-diphospho-1D-myo-inositol pentakisphosphate + H2O = 1D-myo-inositol hexakisphosphate + phosphate + H(+). The catalysed reaction is 5-diphospho-1D-myo-inositol 1,3,4,6-tetrakisphosphate + H2O = 1D-myo-inositol 1,3,4,5,6-pentakisphosphate + phosphate + H(+). With respect to regulation, inhibited by manganese, calcium and zinc ions but not magnesium ions. Functionally, cleaves the beta-phosphate at the 5-position of soluble inositol pyrophosphates. Has highest activity on 5-diphosphoinositol 1,2,3,4,6-pentakisphosphate (5-InsP(7)), 1,5-bis-diphosphoinositol 2,3,4,6-tetrakisphosphate (1,5-InsP(8)) and 3,5-InsP(8), but has weak activity against 1-diphosphoinositol 2,3,4,5,6-pentakisphosphate (1-InsP(7)). Dephosphorylates the phosphoinositides PI(3,4,5)P3, PI(3,5)P2, but not PI(3)P, PI(3,4)P2 or PI(4,5)P2. Possesses phosphotyrosine phosphatase activity in vitro, and can hydrolyze para-nitrophenyl phosphate, O-methylfluorescein phosphate, polyphosphate and ATP. The chain is Inositol diphosphatase DSP1 from Arabidopsis thaliana (Mouse-ear cress).